The chain runs to 360 residues: Mannose-1-phosphate guanylyltransferase catalytic subunit beta (360 aa).

Residues 2 to 222 form a substrate-binding domain region; the sequence is KALILVGGYG…QGFWMDIGQP (221 aa). D110 serves as a coordination point for GDP-alpha-D-mannose. D110 contributes to the Mg(2+) binding site. Residue K162 is part of the active site. A GDP-alpha-D-mannose-binding site is contributed by D218. D218 is a Mg(2+) binding site. The hexapeptide repeat domain stretch occupies residues 245–360; it reads RAGPGFLGNV…DSVPEPRIIM (116 aa).

This sequence belongs to the transferase hexapeptide repeat family. In terms of assembly, component of the GMPPA-GMPPB mannose-1-phosphate guanylyltransferase complex composed of 4 gmppa subunits and 8 gmppb subunits; the complex is organized into three layers, a central layer made up of 2 gmppa dimers sandwiched between two layers each made up of 2 gmppb dimers. Catalytic activity of gmppb is reduced when part of the complex and binding of GDP-alpha-D-Mannose by gmppa induces allosteric feedback inhibition of gmppb. Mg(2+) serves as cofactor.

It carries out the reaction alpha-D-mannose 1-phosphate + GTP + H(+) = GDP-alpha-D-mannose + diphosphate. It functions in the pathway nucleotide-sugar biosynthesis; GDP-alpha-D-mannose biosynthesis; GDP-alpha-D-mannose from alpha-D-mannose 1-phosphate (GTP route): step 1/1. With respect to regulation, enzyme activity is reduced by incorporation into the GMPPA-GMPPB mannose-1-phosphate guanylyltransferase complex. Allosterically inhibited, when part of the GMPPA-GMPPB complex, by GDP-alpha-D-mannose binding to GMPPA. In terms of biological role, catalytic subunit of the GMPPA-GMPPB mannose-1-phosphate guanylyltransferase complex. Catalyzes the formation of GDP-mannose, an essential precursor of glycan moieties of glycoproteins and glycolipids. Can catalyze the reverse reaction in vitro. Together with GMPPA regulates GDP-alpha-D-mannose levels. This chain is Mannose-1-phosphate guanylyltransferase catalytic subunit beta (gmppb), found in Danio rerio (Zebrafish).